A 448-amino-acid polypeptide reads, in one-letter code: Zinc finger and BTB domain-containing protein 44 (448 aa).

The BTB domain maps to 31–98; that stretch reads CDITIRVQDK…AYTATLSINT (68 aa). Positions 289 to 298 are enriched in basic and acidic residues; the sequence is LSDEEVHEEV. Residues 289–320 form a disordered region; the sequence is LSDEEVHEEVSQPVSASQSSMSDQQTVPGSEQ. The span at 299–313 shows a compositional bias: low complexity; it reads SQPVSASQSSMSDQQ. 2 C2H2-type zinc fingers span residues 394 to 416 and 422 to 444; these read FQCP…MLIH and FQCD…RLKH.

The protein resides in the nucleus. This is Zinc finger and BTB domain-containing protein 44 (zbtb44) from Xenopus tropicalis (Western clawed frog).